Consider the following 513-residue polypeptide: GMP synthase [glutamine-hydrolyzing] (513 aa).

One can recognise a Glutamine amidotransferase type-1 domain in the interval 9-198; the sequence is MILVLDFGSQ…VRRICDCTGE (190 aa). The active-site Nucleophile is cysteine 86. Active-site residues include histidine 172 and glutamate 174. A GMPS ATP-PPase domain is found at 199-388; it reads WTMENFIDLE…LGIPEHLVWR (190 aa). 226–232 is an ATP binding site; the sequence is SGGVDSS.

In terms of assembly, homodimer.

The enzyme catalyses XMP + L-glutamine + ATP + H2O = GMP + L-glutamate + AMP + diphosphate + 2 H(+). It participates in purine metabolism; GMP biosynthesis; GMP from XMP (L-Gln route): step 1/1. Its function is as follows. Catalyzes the synthesis of GMP from XMP. The sequence is that of GMP synthase [glutamine-hydrolyzing] from Staphylococcus carnosus (strain TM300).